The primary structure comprises 949 residues: ATPase 5, plasma membrane-type (949 aa).

At Ser-2 the chain carries N-acetylserine. Over 2–61 (SELDHIKNESVDLVRIPMEEVFEELKCTKQGLTANEASHRLDVFGPNKLEEKKESKLLKF) the chain is Cytoplasmic. A helical transmembrane segment spans residues 62–81 (LGFMWNPLSWVMEVAALMAI). Residues 82–93 (ALANGGGRPPDW) lie on the Extracellular side of the membrane. Residues 94–114 (QDFVGIVCLLLINSTISFIEE) traverse the membrane as a helical segment. Over 115 to 243 (NNAGNAAAAL…GHFQKVLTSI (129 aa)) the chain is Cytoplasmic. Residues 244–264 (GNFCICSIALGIIVELLVMYP) form a helical membrane-spanning segment. Topologically, residues 265 to 273 (IQRRRYRDG) are extracellular. Residues 274–291 (IDNLLVLLIGGIPIAMPS) form a helical membrane-spanning segment. At 292–643 (VLSVTMATGS…TSRAIFQRMK (352 aa)) the chain is on the cytoplasmic side. Residue Asp-329 is the 4-aspartylphosphate intermediate of the active site. 2 residues coordinate Mg(2+): Asp-588 and Asp-592. The chain crosses the membrane as a helical span at residues 644–665 (NYTIYAVSITIRIVFGFMFIAL). Residues 666–670 (IWQFD) lie on the Extracellular side of the membrane. The helical transmembrane segment at 671-693 (FSPFMVLIIAILNDGTIMTISKD) threads the bilayer. Residues 694-709 (RMKPSPQPDSWKLRDI) are Cytoplasmic-facing. Residues 710–730 (FSTGVVLGGYQALMTVVFFWV) traverse the membrane as a helical segment. Topologically, residues 731-751 (MKDSDFFSNYFGVRPLSQRPE) are extracellular. A helical transmembrane segment spans residues 752–772 (QMMAALYLQVSIISQALIFVT). Over 773-784 (RSRSWSYAECPG) the chain is Cytoplasmic. The helical transmembrane segment at 785–805 (LLLLGAFVIAQLVATFIAVYA) threads the bilayer. Topologically, residues 806–813 (NWSFARIE) are extracellular. The chain crosses the membrane as a helical span at residues 814 to 834 (GAGWGWAGVIWLYSFLTYIPL). At 835–949 (DLLKFGIRYV…IDTIQQHYTV (115 aa)) the chain is on the cytoplasmic side. A Phosphothreonine modification is found at Thr-881. Phosphoserine occurs at positions 899 and 931. The tract at residues 947-949 (YTV) is interaction with 14-3-3 proteins. Thr-948 carries the phosphothreonine modification.

Belongs to the cation transport ATPase (P-type) (TC 3.A.3) family. Type IIIA subfamily. In terms of assembly, binds to 14-3-3 proteins. The binding is induced by phosphorylation of Thr-948. Binding to 14-3-3 proteins activates the H(+)-ATPase. As to expression, expressed in guard cells and leaves.

It localises to the membrane. The enzyme catalyses ATP + H2O + H(+)(in) = ADP + phosphate + 2 H(+)(out). Functionally, the plasma membrane H(+) ATPase of plants and fungi generates a proton gradient that drives the active transport of nutrients by H(+)-symport. The resulting external acidification and/or internal alkinization may mediate growth responses. This chain is ATPase 5, plasma membrane-type (AHA5), found in Arabidopsis thaliana (Mouse-ear cress).